The primary structure comprises 449 residues: GTPase Der (449 aa).

EngA-type G domains lie at 4 to 169 and 177 to 353; these read PIVA…PAGE and IQVA…EQHR. GTP contacts are provided by residues 10 to 17, 57 to 61, 120 to 123, 183 to 190, 230 to 234, and 295 to 298; these read GRPNVGKS, DTGGL, NKCE, DTAGI, and NKWD. The 86-residue stretch at 354 to 439 folds into the KH-like domain; that stretch reads RRVTTAVVND…PIRLLWRSKK (86 aa).

The protein belongs to the TRAFAC class TrmE-Era-EngA-EngB-Septin-like GTPase superfamily. EngA (Der) GTPase family. In terms of assembly, associates with the 50S ribosomal subunit.

Functionally, GTPase that plays an essential role in the late steps of ribosome biogenesis. The protein is GTPase Der of Thermosynechococcus vestitus (strain NIES-2133 / IAM M-273 / BP-1).